The chain runs to 250 residues: Ribonuclease HII (250 aa).

Positions 66 to 250 constitute an RNase H type-2 domain; sequence ELVAGVDEVG…TFAPVSDFFK (185 aa). Residues D72, E73, and D164 each coordinate a divalent metal cation.

Belongs to the RNase HII family. Requires Mn(2+) as cofactor. Mg(2+) serves as cofactor.

The protein resides in the cytoplasm. The enzyme catalyses Endonucleolytic cleavage to 5'-phosphomonoester.. Functionally, endonuclease that specifically degrades the RNA of RNA-DNA hybrids. This Lactobacillus helveticus (strain DPC 4571) protein is Ribonuclease HII.